The chain runs to 347 residues: Sesquiterpene synthase M422DRAFT_47084 (347 aa).

Mg(2+) is bound by residues Asp-93, Asn-228, Ser-232, and Glu-236. A DDXXD motif motif is present at residues 93 to 97 (DEYTD). The (2E,6E)-farnesyl diphosphate site is built by Arg-318 and Tyr-319.

It belongs to the terpene synthase family. It depends on Mg(2+) as a cofactor.

The catalysed reaction is (2E,6E)-farnesyl diphosphate = viridiflorene + diphosphate. Its function is as follows. Terpene cyclase that catalyzes the cyclization of farnesyl diphosphate (FPP) to viridiflorene and viridiflorol. The protein is Sesquiterpene synthase M422DRAFT_47084 of Sphaerobolus stellatus (strain SS14).